Consider the following 539-residue polypeptide: MHDKILILDFGSQVTQLIARRVREAHVYCEIHPNDVSDAFVREFAPKAVILSGSHASTYEDHQLRAPQAVWDLGVPVLGICYGMQTMAVQLGGKVEWSDHREFGYAEMRAHGHTRLLDGIDDFKTAEGHGMLKVWMSHGDKVAELPPGFTLMASTPSCPIAGMADEARGYYAVQFHPEVTHTVKGRQIIERFVLQIAGAKPDWIMKNHIEEAVAKIREQVGDEEVILGLSGGVDSSVAAALIHRAIGDQLTCVFVDHGLLRLNEGKMVLDMFEGRLHAKVVHVDASEQFLGHLAGVTDPEQKRKIIGREFVEVFQAEAQKLSKAKWLAQGTIYPDVVESGGTKTKKATTIKSHHNVGGLPETLGLKLLEPLRDLFKDEVRELGVALGLPPEMVYRHPFPGPGLGVRILGEVKREYAELLRRADAIFIEELRGTTATAQDAAAGLCGEADVGKSWYDLTSQAFAVFLPVKSVGVMGDGRTYDYVTSLRAVQTTDFMTAHWAHLPYALLGRASNRIINEVRGINRVVYDISGKPPATIEWE.

Residues 4–202 enclose the Glutamine amidotransferase type-1 domain; it reads KILILDFGSQ…VLQIAGAKPD (199 aa). The active-site Nucleophile is the C81. Catalysis depends on residues H176 and E178. The GMPS ATP-PPase domain maps to 203–395; that stretch reads WIMKNHIEEA…LGLPPEMVYR (193 aa). An ATP-binding site is contributed by 230–236; it reads SGGVDSS.

Homodimer.

The catalysed reaction is XMP + L-glutamine + ATP + H2O = GMP + L-glutamate + AMP + diphosphate + 2 H(+). The protein operates within purine metabolism; GMP biosynthesis; GMP from XMP (L-Gln route): step 1/1. Catalyzes the synthesis of GMP from XMP. The polypeptide is GMP synthase [glutamine-hydrolyzing] (Burkholderia vietnamiensis (strain G4 / LMG 22486) (Burkholderia cepacia (strain R1808))).